A 687-amino-acid polypeptide reads, in one-letter code: Glycine--tRNA ligase beta subunit (687 aa).

Belongs to the class-II aminoacyl-tRNA synthetase family. As to quaternary structure, tetramer of two alpha and two beta subunits.

It is found in the cytoplasm. The enzyme catalyses tRNA(Gly) + glycine + ATP = glycyl-tRNA(Gly) + AMP + diphosphate. This is Glycine--tRNA ligase beta subunit from Trichlorobacter lovleyi (strain ATCC BAA-1151 / DSM 17278 / SZ) (Geobacter lovleyi).